Here is a 282-residue protein sequence, read N- to C-terminus: NADPH-dependent 7-cyano-7-deazaguanine reductase (282 aa).

88-90 (IES) provides a ligand contact to substrate. NADPH is bound at residue 90 to 91 (SK). Catalysis depends on Cys-190, which acts as the Thioimide intermediate. Catalysis depends on Asp-197, which acts as the Proton donor. 229–230 (HE) provides a ligand contact to substrate. 258 to 259 (RG) is an NADPH binding site.

This sequence belongs to the GTP cyclohydrolase I family. QueF type 2 subfamily. Homodimer.

It is found in the cytoplasm. It carries out the reaction 7-aminomethyl-7-carbaguanine + 2 NADP(+) = 7-cyano-7-deazaguanine + 2 NADPH + 3 H(+). It functions in the pathway tRNA modification; tRNA-queuosine biosynthesis. Its function is as follows. Catalyzes the NADPH-dependent reduction of 7-cyano-7-deazaguanine (preQ0) to 7-aminomethyl-7-deazaguanine (preQ1). The chain is NADPH-dependent 7-cyano-7-deazaguanine reductase from Salmonella schwarzengrund (strain CVM19633).